A 254-amino-acid chain; its full sequence is 5-oxoprolinase subunit A (254 aa).

The protein belongs to the LamB/PxpA family. In terms of assembly, forms a complex composed of PxpA, PxpB and PxpC.

The enzyme catalyses 5-oxo-L-proline + ATP + 2 H2O = L-glutamate + ADP + phosphate + H(+). Catalyzes the cleavage of 5-oxoproline to form L-glutamate coupled to the hydrolysis of ATP to ADP and inorganic phosphate. The chain is 5-oxoprolinase subunit A from Bacillus mycoides (strain KBAB4) (Bacillus weihenstephanensis).